Reading from the N-terminus, the 238-residue chain is ATP-dependent dethiobiotin synthetase BioD (238 aa).

12–17 (EVGKTV) contributes to the ATP binding site. Thr-16 is a binding site for Mg(2+). Residue Lys-37 is part of the active site. Position 41 (Thr-41) interacts with substrate. Residues Asp-50, 109–112 (EGAG), 170–171 (GS), and 200–202 (PAG) each bind ATP. Residues Asp-50 and Glu-109 each contribute to the Mg(2+) site.

It belongs to the dethiobiotin synthetase family. Homodimer. Mg(2+) serves as cofactor.

Its subcellular location is the cytoplasm. It catalyses the reaction (7R,8S)-7,8-diammoniononanoate + CO2 + ATP = (4R,5S)-dethiobiotin + ADP + phosphate + 3 H(+). The protein operates within cofactor biosynthesis; biotin biosynthesis; biotin from 7,8-diaminononanoate: step 1/2. Its function is as follows. Catalyzes a mechanistically unusual reaction, the ATP-dependent insertion of CO2 between the N7 and N8 nitrogen atoms of 7,8-diaminopelargonic acid (DAPA, also called 7,8-diammoniononanoate) to form a ureido ring. This is ATP-dependent dethiobiotin synthetase BioD from Streptomyces avermitilis (strain ATCC 31267 / DSM 46492 / JCM 5070 / NBRC 14893 / NCIMB 12804 / NRRL 8165 / MA-4680).